The primary structure comprises 441 residues: Glutamate--tRNA ligase 1 (441 aa).

A 'HIGH' region motif is present at residues 8–18 (PSPTGHIHVGN). Positions 239–243 (ELSKR) match the 'KMSKS' region motif. K242 is an ATP binding site.

Belongs to the class-I aminoacyl-tRNA synthetase family. Glutamate--tRNA ligase type 1 subfamily. Monomer.

Its subcellular location is the cytoplasm. The enzyme catalyses tRNA(Glu) + L-glutamate + ATP = L-glutamyl-tRNA(Glu) + AMP + diphosphate. Its function is as follows. Catalyzes the attachment of glutamate to tRNA(Glu) in a two-step reaction: glutamate is first activated by ATP to form Glu-AMP and then transferred to the acceptor end of tRNA(Glu). This Paracoccus denitrificans (strain Pd 1222) protein is Glutamate--tRNA ligase 1.